Consider the following 179-residue polypeptide: Inosine/xanthosine triphosphatase (179 aa).

Glu-71 is a Mg(2+) binding site. Residue 71–72 (EA) coordinates substrate.

The protein belongs to the YjjX NTPase family. In terms of assembly, homodimer. Mg(2+) serves as cofactor. It depends on Mn(2+) as a cofactor.

The catalysed reaction is XTP + H2O = XDP + phosphate + H(+). The enzyme catalyses ITP + H2O = IDP + phosphate + H(+). Its function is as follows. Phosphatase that hydrolyzes non-canonical purine nucleotides such as XTP and ITP to their respective diphosphate derivatives. Probably excludes non-canonical purines from DNA/RNA precursor pool, thus preventing their incorporation into DNA/RNA and avoiding chromosomal lesions. The sequence is that of Inosine/xanthosine triphosphatase from Shewanella sp. (strain MR-7).